The following is a 245-amino-acid chain: UDP-2,3-diacylglucosamine hydrolase (245 aa).

Mn(2+) contacts are provided by aspartate 8, histidine 10, aspartate 41, asparagine 79, and histidine 114. 79–80 (NR) contacts substrate. Substrate-binding residues include aspartate 122, serine 160, asparagine 164, lysine 167, and histidine 195. Histidine 195 and histidine 197 together coordinate Mn(2+).

This sequence belongs to the LpxH family. Mn(2+) is required as a cofactor.

The protein resides in the cell inner membrane. The enzyme catalyses UDP-2-N,3-O-bis[(3R)-3-hydroxytetradecanoyl]-alpha-D-glucosamine + H2O = 2-N,3-O-bis[(3R)-3-hydroxytetradecanoyl]-alpha-D-glucosaminyl 1-phosphate + UMP + 2 H(+). The protein operates within glycolipid biosynthesis; lipid IV(A) biosynthesis; lipid IV(A) from (3R)-3-hydroxytetradecanoyl-[acyl-carrier-protein] and UDP-N-acetyl-alpha-D-glucosamine: step 4/6. Functionally, hydrolyzes the pyrophosphate bond of UDP-2,3-diacylglucosamine to yield 2,3-diacylglucosamine 1-phosphate (lipid X) and UMP by catalyzing the attack of water at the alpha-P atom. Involved in the biosynthesis of lipid A, a phosphorylated glycolipid that anchors the lipopolysaccharide to the outer membrane of the cell. The sequence is that of UDP-2,3-diacylglucosamine hydrolase from Photobacterium profundum (strain SS9).